The primary structure comprises 65 residues: Large ribosomal subunit protein uL29 (65 aa).

Belongs to the universal ribosomal protein uL29 family.

This Paracidovorax citrulli (strain AAC00-1) (Acidovorax citrulli) protein is Large ribosomal subunit protein uL29.